The following is a 495-amino-acid chain: ATP synthase subunit beta, chloroplastic (495 aa).

172–179 (GGAGVGKT) provides a ligand contact to ATP.

Belongs to the ATPase alpha/beta chains family. As to quaternary structure, F-type ATPases have 2 components, CF(1) - the catalytic core - and CF(0) - the membrane proton channel. CF(1) has five subunits: alpha(3), beta(3), gamma(1), delta(1), epsilon(1). CF(0) has four main subunits: a(1), b(1), b'(1) and c(9-12).

Its subcellular location is the plastid. It localises to the chloroplast thylakoid membrane. The enzyme catalyses ATP + H2O + 4 H(+)(in) = ADP + phosphate + 5 H(+)(out). Functionally, produces ATP from ADP in the presence of a proton gradient across the membrane. The catalytic sites are hosted primarily by the beta subunits. The protein is ATP synthase subunit beta, chloroplastic of Pteridium aquilinum (Bracken fern).